The following is a 612-amino-acid chain: Sorting nexin MVP1 (612 aa).

Positions 35–68 (SSAPSPAGSVTPARATASASEGRNIAANGNKEEG) are disordered. The region spanning 226-334 (WKDQERIVVT…NIFLTSSSFE (109 aa)) is the PX domain. A 1,2-diacyl-sn-glycero-3-phospho-(1D-myo-inositol-3-phosphate)-binding residues include R263, S265, K289, and R301.

Belongs to the sorting nexin family.

Its subcellular location is the cytoplasm. The protein resides in the membrane. Functionally, required for vacuolar protein sorting. The protein is Sorting nexin MVP1 (MVP1) of Cryptococcus neoformans var. neoformans serotype D (strain B-3501A) (Filobasidiella neoformans).